Here is a 188-residue protein sequence, read N- to C-terminus: Elongation factor P (188 aa).

Lys-34 carries the post-translational modification N6-(3,6-diaminohexanoyl)-5-hydroxylysine.

It belongs to the elongation factor P family. In terms of processing, may be beta-lysylated on the epsilon-amino group of Lys-34 by the combined action of EpmA and EpmB, and then hydroxylated on the C5 position of the same residue by EpmC (if this protein is present). Lysylation is critical for the stimulatory effect of EF-P on peptide-bond formation. The lysylation moiety may extend toward the peptidyltransferase center and stabilize the terminal 3-CCA end of the tRNA. Hydroxylation of the C5 position on Lys-34 may allow additional potential stabilizing hydrogen-bond interactions with the P-tRNA.

The protein resides in the cytoplasm. It participates in protein biosynthesis; polypeptide chain elongation. In terms of biological role, involved in peptide bond synthesis. Alleviates ribosome stalling that occurs when 3 or more consecutive Pro residues or the sequence PPG is present in a protein, possibly by augmenting the peptidyl transferase activity of the ribosome. Modification of Lys-34 is required for alleviation. This chain is Elongation factor P, found in Yersinia pseudotuberculosis serotype O:1b (strain IP 31758).